The sequence spans 260 residues: Proteasome subunit alpha type-1 (260 aa).

Residues 231–260 (FLEGLEERPQRKPALPADEPAEKAEEPMEH) are disordered. Positions 250-260 (PAEKAEEPMEH) are enriched in basic and acidic residues.

It belongs to the peptidase T1A family. As to quaternary structure, the 26S proteasome consists of a 20S proteasome core and two 19S regulatory subunits. The 20S proteasome core is a barrel-shaped complex made of 28 subunits that are arranged in four stacked rings. The two outer rings are each formed by seven alpha subunits, and the two inner rings are formed by seven beta subunits. The proteolytic activity is exerted by three beta-subunits PSMB5, PSMB6 and PSMB7.

The protein localises to the cytoplasm. Its subcellular location is the nucleus. Its function is as follows. Component of the 20S core proteasome complex involved in the proteolytic degradation of most intracellular proteins. This complex plays numerous essential roles within the cell by associating with different regulatory particles. Associated with two 19S regulatory particles, forms the 26S proteasome and thus participates in the ATP-dependent degradation of ubiquitinated proteins. The 26S proteasome plays a key role in the maintenance of protein homeostasis by removing misfolded or damaged proteins that could impair cellular functions, and by removing proteins whose functions are no longer required. Associated with the PA200 or PA28, the 20S proteasome mediates ubiquitin-independent protein degradation. This type of proteolysis is required in several pathways including spermatogenesis (20S-PA200 complex) or generation of a subset of MHC class I-presented antigenic peptides (20S-PA28 complex). The chain is Proteasome subunit alpha type-1 (PSMA1) from Gallus gallus (Chicken).